The following is a 644-amino-acid chain: Exoribonuclease 2 (644 aa).

Residues 189 to 516 (REDLTALNFV…NHRLLKAVIT (328 aa)) form the RNB domain. One can recognise an S1 motif domain in the interval 561–643 (DIRFNAEIID…ETRGIVAKPA (83 aa)).

Belongs to the RNR ribonuclease family. RNase II subfamily.

Its subcellular location is the cytoplasm. The catalysed reaction is Exonucleolytic cleavage in the 3'- to 5'-direction to yield nucleoside 5'-phosphates.. Functionally, involved in mRNA degradation. Hydrolyzes single-stranded polyribonucleotides processively in the 3' to 5' direction. In Pectobacterium atrosepticum (strain SCRI 1043 / ATCC BAA-672) (Erwinia carotovora subsp. atroseptica), this protein is Exoribonuclease 2.